The sequence spans 140 residues: Small ribosomal subunit protein uS19 (140 aa).

The protein belongs to the universal ribosomal protein uS19 family.

Protein S19 forms a complex with S13 that binds strongly to the 16S ribosomal RNA. The sequence is that of Small ribosomal subunit protein uS19 from Sulfolobus acidocaldarius (strain ATCC 33909 / DSM 639 / JCM 8929 / NBRC 15157 / NCIMB 11770).